The sequence spans 732 residues: Coagulation factor XIII A chain (732 aa).

A disordered region spans residues 1–27 (MSETSRTAFGGRRAVPPNNSNAAEDDL). S2 is subject to N-acetylserine. A propeptide spans 2 to 38 (SETSRTAFGGRRAVPPNNSNAAEDDLPTVELQGVVPR) (activation peptide). Active-site residues include C315, H374, and D397. Ca(2+)-binding residues include N437, D439, E486, and E491. An N-linked (GlcNAc...) asparagine glycan is attached at N614.

This sequence belongs to the transglutaminase superfamily. Transglutaminase family. Tetramer of two A chains (F13A1) and two B (F13B) chains. Ca(2+) serves as cofactor. Post-translationally, the activation peptide is released by thrombin.

It is found in the cytoplasm. It localises to the secreted. The catalysed reaction is L-glutaminyl-[protein] + L-lysyl-[protein] = [protein]-L-lysyl-N(6)-5-L-glutamyl-[protein] + NH4(+). Its function is as follows. Factor XIII is activated by thrombin and calcium ion to a transglutaminase that catalyzes the formation of gamma-glutamyl-epsilon-lysine cross-links between fibrin chains, thus stabilizing the fibrin clot. Also cross-link alpha-2-plasmin inhibitor, or fibronectin, to the alpha chains of fibrin. This chain is Coagulation factor XIII A chain (F13A1), found in Homo sapiens (Human).